A 360-amino-acid chain; its full sequence is Phospho-N-acetylmuramoyl-pentapeptide-transferase (360 aa).

Over 1–25 (MLVWLAEHLVKYYSGFNVFSYLTFR) the chain is Periplasmic. A helical transmembrane segment spans residues 26-46 (AIVSLLTALFISLWMGPRMIA). At 47-71 (RLQKLSFGQVVRNDGPESHFSKRGT) the chain is on the cytoplasmic side. Residues 72–92 (PTMGGIMILTAIVISVLLWAY) form a helical membrane-spanning segment. A topological domain (periplasmic) is located at residue proline 93. Residues 94 to 114 (SNPYVWCVLVVLIGYGIIGFV) form a helical membrane-spanning segment. Residues 115-131 (DDYRKVVRKDTKGLIAR) lie on the Cytoplasmic side of the membrane. Residues 132 to 152 (WKYFWMSVIALGVAFALYLVG) form a helical membrane-spanning segment. Topologically, residues 153-167 (KDTPVTQLVVPFFKD) are periplasmic. Residues 168–188 (VMPQLGLFYILLSYFVIVGTG) traverse the membrane as a helical segment. At 189 to 198 (NAVNLTDGLD) the chain is on the cytoplasmic side. Residues 199 to 219 (GLAIMPTVFVAAGFALVAWAT) traverse the membrane as a helical segment. At 220-235 (GNMNFANYLHIPYLRH) the chain is on the periplasmic side. The helical transmembrane segment at 236-256 (AGELVIVCTAIVGAGLGFLWF) threads the bilayer. The Cytoplasmic segment spans residues 257–262 (NTYPAQ). A helical membrane pass occupies residues 263 to 283 (VFMGDVGSLALGGALGIIAVL). Over 284-287 (LRQE) the chain is Periplasmic. Residues 288 to 308 (FLLVIMGGVFVVETLSVILQV) traverse the membrane as a helical segment. The Cytoplasmic portion of the chain corresponds to 309 to 337 (GSFKLRGQRIFRMAPIHHHYELKGWPEPR). A helical membrane pass occupies residues 338-358 (VIVRFWIISLMLVLIGLATLK). At 359–360 (VR) the chain is on the periplasmic side.

It belongs to the glycosyltransferase 4 family. MraY subfamily. Requires Mg(2+) as cofactor.

It is found in the cell inner membrane. The catalysed reaction is UDP-N-acetyl-alpha-D-muramoyl-L-alanyl-gamma-D-glutamyl-meso-2,6-diaminopimeloyl-D-alanyl-D-alanine + di-trans,octa-cis-undecaprenyl phosphate = di-trans,octa-cis-undecaprenyl diphospho-N-acetyl-alpha-D-muramoyl-L-alanyl-D-glutamyl-meso-2,6-diaminopimeloyl-D-alanyl-D-alanine + UMP. It participates in cell wall biogenesis; peptidoglycan biosynthesis. Catalyzes the initial step of the lipid cycle reactions in the biosynthesis of the cell wall peptidoglycan: transfers peptidoglycan precursor phospho-MurNAc-pentapeptide from UDP-MurNAc-pentapeptide onto the lipid carrier undecaprenyl phosphate, yielding undecaprenyl-pyrophosphoryl-MurNAc-pentapeptide, known as lipid I. The protein is Phospho-N-acetylmuramoyl-pentapeptide-transferase of Salmonella paratyphi C (strain RKS4594).